The sequence spans 386 residues: Phosphoglycerate kinase (386 aa).

Substrate contacts are provided by residues 21–23, Arg36, 59–62, Arg113, and Arg146; these read DLN and HLGR. ATP-binding positions include Lys197, Glu314, and 340–343; that span reads GGDT.

This sequence belongs to the phosphoglycerate kinase family. As to quaternary structure, monomer.

It localises to the cytoplasm. The catalysed reaction is (2R)-3-phosphoglycerate + ATP = (2R)-3-phospho-glyceroyl phosphate + ADP. Its pathway is carbohydrate degradation; glycolysis; pyruvate from D-glyceraldehyde 3-phosphate: step 2/5. The sequence is that of Phosphoglycerate kinase from Vibrio campbellii (strain ATCC BAA-1116).